Reading from the N-terminus, the 576-residue chain is MAGUK p55 subfamily member 7 (576 aa).

2 L27 domains span residues 10–64 (SEMG…EDCA) and 65–122 (PTPV…YDPE). The 82-residue stretch at 139–220 (IIRLVKNKEP…AITFKVVPGI (82 aa)) folds into the PDZ domain. An SH3 domain is found at 228-298 (EPKMFIKALF…PSKHFQERRL (71 aa)). Residues 368-560 (HRLVVLVGPT…AFSELKQALK (193 aa)) enclose the Guanylate kinase-like domain.

The protein belongs to the MAGUK family.

Its subcellular location is the membrane. It localises to the cell junction. It is found in the tight junction. The protein localises to the adherens junction. Its function is as follows. Acts as an important adapter that promotes epithelial cell polarity and tight junction formation. Involved in the assembly of protein complexes at sites of cell-cell contact. This Danio rerio (Zebrafish) protein is MAGUK p55 subfamily member 7 (mpp7).